The following is an 86-amino-acid chain: Muscarinic toxin 2 (86 aa).

An N-terminal signal peptide occupies residues 1-21 (MKTLLLTLVVVTIVCLDLGYT). Disulfide bonds link cysteine 24-cysteine 45, cysteine 38-cysteine 63, cysteine 67-cysteine 78, and cysteine 79-cysteine 84.

This sequence belongs to the three-finger toxin family. Short-chain subfamily. Aminergic toxin sub-subfamily. As to quaternary structure, monomer. Expressed by the venom gland.

The protein localises to the secreted. Functionally, binds irreversibly to M1 (CHRM1) muscarinic acetylcholine receptors, and reveals a slightly weaker effect on M3 (CHRM3) receptors. The mechanism of toxin-receptor interaction comprises at least two steps. The first step is fast with no competition between the toxin and the antagonist. The second step is slow with formation of a more stable toxin-receptor complex and inhibition of the antagonist binding. In Dendroaspis angusticeps (Eastern green mamba), this protein is Muscarinic toxin 2.